Consider the following 343-residue polypeptide: tRNA N6-adenosine threonylcarbamoyltransferase (343 aa).

The Fe cation site is built by His-116 and His-120. Residues 138-142, Asp-172, Gly-185, Asp-189, and Asn-277 each bind substrate; that span reads LVSGG. Asp-305 lines the Fe cation pocket.

This sequence belongs to the KAE1 / TsaD family. Requires Fe(2+) as cofactor.

The protein localises to the cytoplasm. The enzyme catalyses L-threonylcarbamoyladenylate + adenosine(37) in tRNA = N(6)-L-threonylcarbamoyladenosine(37) in tRNA + AMP + H(+). Required for the formation of a threonylcarbamoyl group on adenosine at position 37 (t(6)A37) in tRNAs that read codons beginning with adenine. Is involved in the transfer of the threonylcarbamoyl moiety of threonylcarbamoyl-AMP (TC-AMP) to the N6 group of A37, together with TsaE and TsaB. TsaD likely plays a direct catalytic role in this reaction. The protein is tRNA N6-adenosine threonylcarbamoyltransferase of Mycobacterium ulcerans (strain Agy99).